Reading from the N-terminus, the 188-residue chain is Ion-translocating oxidoreductase complex subunit B (188 aa).

Positions 1–23 are hydrophobic; it reads MFTAIWVMVGLAIAIGLILGWSA. The region spanning 29-88 is the 4Fe-4S domain; it reads EGNPLAEKIDAILPQTQCGQCGFPGCRPYAEAIAKGEADINQCPPGGEEGVKKLAELLGV. Residues cysteine 46, cysteine 49, cysteine 54, cysteine 71, cysteine 113, cysteine 116, cysteine 119, cysteine 123, cysteine 143, cysteine 146, cysteine 149, and cysteine 153 each contribute to the [4Fe-4S] cluster site. 2 4Fe-4S ferredoxin-type domains span residues 104 to 133 and 134 to 163; these read SVAFIDEQTCIGCTLCIQACPVDAISGAAK and QMHTIIADECTGCELCLAPCPVDCISMVPI.

Belongs to the 4Fe4S bacterial-type ferredoxin family. RnfB subfamily. The complex is composed of six subunits: RnfA, RnfB, RnfC, RnfD, RnfE and RnfG. The cofactor is [4Fe-4S] cluster.

The protein localises to the cell inner membrane. Part of a membrane-bound complex that couples electron transfer with translocation of ions across the membrane. The sequence is that of Ion-translocating oxidoreductase complex subunit B from Thiobacillus denitrificans (strain ATCC 25259 / T1).